The primary structure comprises 197 residues: dITP/XTP pyrophosphatase (197 aa).

Position 8–13 (8–13 (TGNQGK)) interacts with substrate. The active-site Proton acceptor is the D69. Residue D69 coordinates Mg(2+). Substrate contacts are provided by residues S70, 154–157 (FGYD), K177, and 182–183 (HR).

This sequence belongs to the HAM1 NTPase family. As to quaternary structure, homodimer. It depends on Mg(2+) as a cofactor.

It catalyses the reaction XTP + H2O = XMP + diphosphate + H(+). The catalysed reaction is dITP + H2O = dIMP + diphosphate + H(+). It carries out the reaction ITP + H2O = IMP + diphosphate + H(+). Its function is as follows. Pyrophosphatase that catalyzes the hydrolysis of nucleoside triphosphates to their monophosphate derivatives, with a high preference for the non-canonical purine nucleotides XTP (xanthosine triphosphate), dITP (deoxyinosine triphosphate) and ITP. Seems to function as a house-cleaning enzyme that removes non-canonical purine nucleotides from the nucleotide pool, thus preventing their incorporation into DNA/RNA and avoiding chromosomal lesions. The sequence is that of dITP/XTP pyrophosphatase from Photobacterium profundum (strain SS9).